The following is a 521-amino-acid chain: MINNFDQQIQYIPQFQQMQHQMQQQQQQQMQQQQQQQQQQQPQQMQIQLSTHEERLELASQSSPFEEKVTLNGLQKNIKVVIKNSPFNVQLRLKKANEIDLNCVAFESTLLYDCDTNEEKEVDFVKVKPVEHKASPNETGELVNIELRIKVLTSQHEDMFFRVKIEGQDPISKEPIKGLYALTHSIKVISKPEQLKKKQPPKKRTWNDILLESVSKIQHQQHEQQKLIEKLLQQQAGLSGSTSTTNNNNTTTTTTTTSSNNITSSSAINLPSPPSSTSSSPSSSPSSSPTLVNSHLLTSTLNNTSSNNLNSSSNTLNNNNNNNNNNSNTSTSNNNNCNINNNNNNNNNNNNNNISGFEDSFKQMMNAYTQLDPRQRAEKVRRVFRNASSRDSETLSELLDLFITEGVGGQLGTAVAPLPNSPPRLSNSSTQIQNSNNNNNNNNNNNNNNNNNNNNSNNNNSTNNNNNNNNNNNNNSTIPNNPFMSSHSNNGDPYPFFSNNSFDNDSFNSFGGSSNSEFIPF.

Residues 14–41 adopt a coiled-coil conformation; sequence QFQQMQHQMQQQQQQQMQQQQQQQQQQQ. Composition is skewed to low complexity over residues 238-266, 275-353, and 423-482; these read LSGSTSTTNNNNTTTTTTTTSSNNITSSS, SSTS…NNNN, and PRLS…PNNP. Disordered regions lie at residues 238-357 and 413-491; these read LSGS…ISGF and TAVA…SNNG.

This is an uncharacterized protein from Dictyostelium discoideum (Social amoeba).